The chain runs to 201 residues: Peptide deformylase (201 aa).

Positions 92 and 134 each coordinate Fe cation. Glu135 is a catalytic residue. His138 provides a ligand contact to Fe cation.

This sequence belongs to the polypeptide deformylase family. The cofactor is Fe(2+).

The catalysed reaction is N-terminal N-formyl-L-methionyl-[peptide] + H2O = N-terminal L-methionyl-[peptide] + formate. Its function is as follows. Removes the formyl group from the N-terminal Met of newly synthesized proteins. Requires at least a dipeptide for an efficient rate of reaction. N-terminal L-methionine is a prerequisite for activity but the enzyme has broad specificity at other positions. The polypeptide is Peptide deformylase (Rhodopirellula baltica (strain DSM 10527 / NCIMB 13988 / SH1)).